Here is a 276-residue protein sequence, read N- to C-terminus: MGVKKKLKLTSLLGLSLLIMTACATNGVTSDITAESADFWSKLVYFFAEIIRFLSFDISIGVGIILFTVLIRTVLLPVFQVQMVASRKMQEAQPRIKALREQYPGRDMESRTKLEQEMRKVFKEMGVRQSDSLWPILIQMPVILALFQALSRVDFLKTGHFLWINLGSVDTTLVLPILAAVFTFLSTWLSNKALSERNGATTAMMYGIPVLIFIFAVYAPGGVALYWTVSNAYQVLQTYFLNNPFKIIAEREAVVQAQKDLENRKRKAKKKAQKTK.

The N-terminal stretch at 1-22 (MGVKKKLKLTSLLGLSLLIMTA) is a signal peptide. The N-palmitoyl cysteine moiety is linked to residue C23. C23 carries the S-diacylglycerol cysteine lipid modification. A run of 4 helical transmembrane segments spans residues 58–78 (ISIGVGIILFTVLIRTVLLPV), 130–150 (SDSLWPILIQMPVILALFQAL), 169–189 (VDTTLVLPILAAVFTFLSTWL), and 207–227 (GIPVLIFIFAVYAPGGVALYW).

The protein belongs to the OXA1/ALB3/YidC family. Type 2 subfamily. In terms of assembly, interacts with KhpB (also called EloR/Jag).

The protein localises to the cell membrane. Its function is as follows. Required for the insertion and/or proper folding and/or complex formation of integral membrane proteins into the membrane. Involved in integration of membrane proteins that insert both dependently and independently of the Sec translocase complex, as well as at least some lipoproteins. This Streptococcus pneumoniae (strain ATCC BAA-255 / R6) protein is Membrane protein insertase YidC 2.